The sequence spans 135 residues: Probable 5-hydroxyisourate hydrolase R09H10.3 (135 aa).

The first 20 residues, Met1–Ser20, serve as a signal peptide directing secretion. 3 residues coordinate substrate: His30, Arg68, and Tyr132.

Belongs to the transthyretin family. 5-hydroxyisourate hydrolase subfamily. Homotetramer.

It catalyses the reaction 5-hydroxyisourate + H2O = 5-hydroxy-2-oxo-4-ureido-2,5-dihydro-1H-imidazole-5-carboxylate + H(+). Its function is as follows. Catalyzes the hydrolysis of 5-hydroxyisourate (HIU) to 2-oxo-4-hydroxy-4-carboxy-5-ureidoimidazoline (OHCU). The protein is Probable 5-hydroxyisourate hydrolase R09H10.3 of Caenorhabditis elegans.